A 315-amino-acid polypeptide reads, in one-letter code: Acetaldehyde dehydrogenase (315 aa).

NAD(+) is bound at residue 13–16; sequence SGNI. Residue C131 is the Acyl-thioester intermediate of the active site. Residues 163-171 and N290 contribute to the NAD(+) site; that span reads SAGPGTRAN.

The protein belongs to the acetaldehyde dehydrogenase family.

The enzyme catalyses acetaldehyde + NAD(+) + CoA = acetyl-CoA + NADH + H(+). The polypeptide is Acetaldehyde dehydrogenase (Xanthobacter autotrophicus (strain ATCC BAA-1158 / Py2)).